Consider the following 861-residue polypeptide: Transcription factor opdJ (861 aa).

Positions 11-37 form a DNA-binding region, zn(2)-C6 fungal-type; it reads CSHCSKAKARCDRKVPCSRCVSKQLVC.

It localises to the nucleus. In terms of biological role, transcription factor that positively regulates the gene cluster that mediates the biosynthesis of oxopyrrolidines, polyketide-amino acid hybrid compounds with feature structures of tetramic acid. The polypeptide is Transcription factor opdJ (Penicillium oxalicum (strain 114-2 / CGMCC 5302) (Penicillium decumbens)).